A 155-amino-acid chain; its full sequence is S-ribosylhomocysteine lyase (155 aa).

The Fe cation site is built by histidine 58, histidine 62, and cysteine 125.

The protein belongs to the LuxS family. As to quaternary structure, homodimer. It depends on Fe cation as a cofactor.

The enzyme catalyses S-(5-deoxy-D-ribos-5-yl)-L-homocysteine = (S)-4,5-dihydroxypentane-2,3-dione + L-homocysteine. Involved in the synthesis of autoinducer 2 (AI-2) which is secreted by bacteria and is used to communicate both the cell density and the metabolic potential of the environment. The regulation of gene expression in response to changes in cell density is called quorum sensing. Catalyzes the transformation of S-ribosylhomocysteine (RHC) to homocysteine (HC) and 4,5-dihydroxy-2,3-pentadione (DPD). This chain is S-ribosylhomocysteine lyase, found in Chromohalobacter salexigens (strain ATCC BAA-138 / DSM 3043 / CIP 106854 / NCIMB 13768 / 1H11).